We begin with the raw amino-acid sequence, 283 residues long: 4-diphosphocytidyl-2-C-methyl-D-erythritol kinase (283 aa).

The active site involves Lys-10. 99-109 (PMGGGLGGGSS) contributes to the ATP binding site. The active site involves Asp-141.

It belongs to the GHMP kinase family. IspE subfamily. Homodimer.

The enzyme catalyses 4-CDP-2-C-methyl-D-erythritol + ATP = 4-CDP-2-C-methyl-D-erythritol 2-phosphate + ADP + H(+). It functions in the pathway isoprenoid biosynthesis; isopentenyl diphosphate biosynthesis via DXP pathway; isopentenyl diphosphate from 1-deoxy-D-xylulose 5-phosphate: step 3/6. In terms of biological role, catalyzes the phosphorylation of the position 2 hydroxy group of 4-diphosphocytidyl-2C-methyl-D-erythritol. This chain is 4-diphosphocytidyl-2-C-methyl-D-erythritol kinase, found in Shigella boydii serotype 18 (strain CDC 3083-94 / BS512).